Consider the following 198-residue polypeptide: Large ribosomal subunit protein bL12m (198 aa).

The N-terminal 36 residues, M1–L36, are a transit peptide targeting the mitochondrion. The segment covering G106–E115 has biased composition (low complexity). Residues G106 to E126 form a disordered region. 4 positions are modified to N6-acetyllysine: K125, K138, K142, and K144. K150 is modified (N6-acetyllysine; alternate). At K150 the chain carries N6-succinyllysine; alternate. A Glycyl lysine isopeptide (Lys-Gly) (interchain with G-Cter in ubiquitin) cross-link involves residue K150. K162 carries the N6-succinyllysine modification. An N6-acetyllysine mark is found at K163 and K173. Position 178 is an N6-acetyllysine; alternate (K178). K178 bears the N6-succinyllysine; alternate mark. K185 carries the post-translational modification N6-acetyllysine.

It belongs to the bacterial ribosomal protein bL12 family. Component of the mitochondrial ribosome large subunit (39S) which comprises a 16S rRNA and about 50 distinct proteins. Interacts with NOA1. Post-translationally, two mature forms are produced by differential two-step proteolytic cleavage. Cleaved by the mitochondrial processing protease to produce the long mature form and subsequently by the mitochondrial intermediate protease to produce the short mature form. In the presence of CUL3, undergoes 'Lys-63'-linked ubiquitination at Lys-150 which results in proteasomal degradation.

The protein localises to the mitochondrion matrix. Its function is as follows. As a component of the mitochondrial large ribosomal subunit, plays a role in mitochondrial translation. When present in mitochondria as a free protein not associated with the ribosome, associates with mitochondrial RNA polymerase POLRMT to activate transcription. Required for POLRMT stability. This Bos taurus (Bovine) protein is Large ribosomal subunit protein bL12m (MRPL12).